Here is a 167-residue protein sequence, read N- to C-terminus: UPF0587 protein F46B6.12 (167 aa).

Zn(2+)-binding residues include Cys34, Cys37, Cys68, and Cys71.

The protein belongs to the UPF0587 family.

The sequence is that of UPF0587 protein F46B6.12 from Caenorhabditis elegans.